Here is a 31-residue protein sequence, read N- to C-terminus: Toxin BmKK16 (31 aa).

Glutamine 1 carries the post-translational modification Pyrrolidone carboxylic acid. Cystine bridges form between cysteine 4–cysteine 20, cysteine 10–cysteine 25, and cysteine 14–cysteine 27. Proline 31 carries the post-translational modification Proline amide.

This sequence belongs to the short scorpion toxin superfamily. Potassium channel inhibitor family. Alpha-KTx 17 subfamily. Post-translationally, the N-terminus is blocked. Expressed by the venom gland.

It is found in the secreted. In terms of biological role, blocker of potassium channels (Kv). The protein is Toxin BmKK16 of Olivierus martensii (Manchurian scorpion).